The sequence spans 154 residues: Myoglobin (154 aa).

Residues 2 to 148 enclose the Globin domain; that stretch reads GLSDGEWQLV…FRNDIAAKYK (147 aa). S4 is subject to Phosphoserine. H65 contributes to the nitrite binding site. Position 65 (H65) interacts with O2. T68 is subject to Phosphothreonine. A heme b-binding site is contributed by H94.

This sequence belongs to the globin family. In terms of assembly, monomeric.

The protein resides in the cytoplasm. Its subcellular location is the sarcoplasm. It catalyses the reaction Fe(III)-heme b-[protein] + nitric oxide + H2O = Fe(II)-heme b-[protein] + nitrite + 2 H(+). The enzyme catalyses H2O2 + AH2 = A + 2 H2O. Functionally, monomeric heme protein which primary function is to store oxygen and facilitate its diffusion within muscle tissues. Reversibly binds oxygen through a pentacoordinated heme iron and enables its timely and efficient release as needed during periods of heightened demand. Depending on the oxidative conditions of tissues and cells, and in addition to its ability to bind oxygen, it also has a nitrite reductase activity whereby it regulates the production of bioactive nitric oxide. Under stress conditions, like hypoxia and anoxia, it also protects cells against reactive oxygen species thanks to its pseudoperoxidase activity. The chain is Myoglobin (MB) from Otolemur crassicaudatus (Brown greater galago).